The chain runs to 420 residues: UDP-N-acetylmuramoylalanine--D-glutamate ligase (420 aa).

109-115 is a binding site for ATP; the sequence is GSVGKST.

Belongs to the MurCDEF family.

The protein resides in the cytoplasm. It carries out the reaction UDP-N-acetyl-alpha-D-muramoyl-L-alanine + D-glutamate + ATP = UDP-N-acetyl-alpha-D-muramoyl-L-alanyl-D-glutamate + ADP + phosphate + H(+). The protein operates within cell wall biogenesis; peptidoglycan biosynthesis. Its function is as follows. Cell wall formation. Catalyzes the addition of glutamate to the nucleotide precursor UDP-N-acetylmuramoyl-L-alanine (UMA). The sequence is that of UDP-N-acetylmuramoylalanine--D-glutamate ligase from Fervidobacterium nodosum (strain ATCC 35602 / DSM 5306 / Rt17-B1).